We begin with the raw amino-acid sequence, 228 residues long: uncharacterized protein (228 aa).

Residues 1–19 form the signal peptide; that stretch reads MYRYTWLLWWITILLRIQQ. Asn41, Asn93, Asn100, Asn128, and Asn164 each carry an N-linked (GlcNAc...) asparagine; by host glycan. A helical transmembrane segment spans residues 189–209; the sequence is MWIIPLVIVTTIIVLICFKFP.

It belongs to the HHV-5 UL9 family.

The protein localises to the host membrane. This is an uncharacterized protein from Homo sapiens (Human).